We begin with the raw amino-acid sequence, 661 residues long: Peroxisomal acyl-coenzyme A oxidase 1 (661 aa).

Serine 26 is modified (phosphoserine). Lysine 65 carries the post-translational modification N6-acetyllysine. N6-succinyllysine occurs at positions 89 and 90. Threonine 139 is a binding site for FAD. Lysine 159 is modified (N6-succinyllysine). Glycine 178 contributes to the FAD binding site. Lysine 216 bears the N6-acetyllysine mark. Residue lysine 241 is modified to N6-succinyllysine. Lysine 255, lysine 267, and lysine 272 each carry N6-acetyllysine. Lysine 349 carries the N6-succinyllysine modification. Glutamate 421 acts as the Proton acceptor in catalysis. Lysine 437 and lysine 446 each carry N6-acetyllysine; alternate. N6-succinyllysine; alternate occurs at positions 437 and 446. Lysine 500 bears the N6-acetyllysine mark. Residue lysine 512 is modified to N6-acetyllysine; alternate. Lysine 512 is modified (N6-succinyllysine; alternate). Lysine 542 is modified (N6-succinyllysine). The residue at position 637 (lysine 637) is an N6-acetyllysine; alternate. Lysine 637 is subject to N6-succinyllysine; alternate. Lysine 643 carries the N6-succinyllysine modification. Serine 649 carries the phosphoserine modification. Lysine 652 bears the N6-acetyllysine mark. Lysine 655 is modified (N6-succinyllysine). A Microbody targeting signal motif is present at residues 659–661 (SKL).

It belongs to the acyl-CoA oxidase family. In terms of assembly, homodimer. Interacts with LONP2. Requires FAD as cofactor. Highest levels of isoform 1 are found in liver and kidney while highest levels of isoform 2 are found in white adipose tissue. Isoform 1 is expressed at higher levels than isoform 2 in liver and kidney while isoform 2 is expressed at higher levels in brain, heart, lung, muscle, white adipose tissue and testis.

The protein resides in the peroxisome. The enzyme catalyses a 2,3-saturated acyl-CoA + O2 = a (2E)-enoyl-CoA + H2O2. It carries out the reaction hexadecanoyl-CoA + O2 = (2E)-hexadecenoyl-CoA + H2O2. The catalysed reaction is dodecanoyl-CoA + O2 = (2E)-dodecenoyl-CoA + H2O2. It catalyses the reaction octanoyl-CoA + O2 = (2E)-octenoyl-CoA + H2O2. The enzyme catalyses decanoyl-CoA + O2 = (2E)-decenoyl-CoA + H2O2. It carries out the reaction tetradecanoyl-CoA + O2 = (2E)-tetradecenoyl-CoA + H2O2. The catalysed reaction is hexadecanedioyl-CoA + O2 = (2E)-hexadecenedioyl-CoA + H2O2. It catalyses the reaction tetracosanoyl-CoA + O2 = (2E)-tetracosenoyl-CoA + H2O2. The enzyme catalyses glutaryl-CoA + O2 = (2E)-glutaconyl-CoA + H2O2. It carries out the reaction hexanoyl-CoA + O2 = (2E)-hexenoyl-CoA + H2O2. The catalysed reaction is octadecanoyl-CoA + O2 = (2E)-octadecenoyl-CoA + H2O2. It catalyses the reaction (5Z,8Z,11Z,14Z,17Z)-eicosapentaenoyl-CoA + O2 = (2E,5Z,8Z,11Z,14Z,17Z)-icosahexaenoyl-CoA + H2O2. The enzyme catalyses (6Z,9Z,12Z,15Z,18Z,21Z)-tetracosahexaenoyl-CoA + O2 = (2E,6Z,9Z,12Z,15Z,18Z,21Z)-tetracosaheptaenoyl-CoA + H2O2. It functions in the pathway lipid metabolism; peroxisomal fatty acid beta-oxidation. Involved in the initial and rate-limiting step of peroxisomal beta-oxidation of straight-chain saturated and unsaturated very-long-chain fatty acids. Catalyzes the desaturation of fatty acyl-CoAs such as palmitoyl-CoA (hexadecanoyl-CoA) to 2-trans-enoyl-CoAs ((2E)-enoyl-CoAs) such as (2E)-hexadecenoyl-CoA, and donates electrons directly to molecular oxygen (O(2)), thereby producing hydrogen peroxide (H(2)O(2)). In terms of biological role, shows highest activity against medium-chain fatty acyl-CoAs. Shows optimum activity with a chain length of 10 carbons (decanoyl-CoA) in vitro. Its function is as follows. Is active against a much broader range of substrates and shows activity towards long-chain acyl-CoAs. The polypeptide is Peroxisomal acyl-coenzyme A oxidase 1 (Mus musculus (Mouse)).